The following is a 1350-amino-acid chain: 1-phosphatidylinositol 4,5-bisphosphate phosphodiesterase gamma plc-3 (1350 aa).

Residues 1–40 (MQHGSLGPSSSSRKTTVTSTAGSVHLHHRSSNGFSTASRA) are disordered. The segment covering 9 to 20 (SSSSRKTTVTST) has biased composition (low complexity). Residues 31-40 (SNGFSTASRA) are compositionally biased toward polar residues. Residues 352 to 503 (HDMSRPLSHY…LKKKIIVKHK (152 aa)) enclose the PI-PLC X-box domain. Residues histidine 367 and histidine 419 contribute to the active site. The disordered stretch occupies residues 570 to 594 (NPNDDTVSVSGDEEREEETPSGFGV). SH2 domains follow at residues 605–704 (WFHG…TIPC) and 715–804 (WFSA…RFPV). Residues 832–890 (DKEVQARALRPYRGTADDELSFPANVIITVLRKEEGLWRGRYGSLTGWFPSAHVQEILP) enclose the SH3 domain. A PH domain is found at 855 to 960 (ANVIITVLRK…WQNNLFELTR (106 aa)). Positions 982–1092 (LSNLVVYCQA…CGYLLKPDYM (111 aa)) constitute a PI-PLC Y-box domain. A C2 domain is found at 1099–1220 (PTNTEKFATA…CGFRSVPLKN (122 aa)). The segment at 1270–1350 (GDSIPREMAP…KFSFGKSSKS (81 aa)) is disordered. Polar residues predominate over residues 1283 to 1329 (TSATDRSLDSPTNSESRATLLSGQRGSQDSMDSAAETSSIASGTISS). Over residues 1340 to 1350 (KKFSFGKSSKS) the composition is skewed to low complexity.

It depends on Ca(2+) as a cofactor. Expressed in intestine, isthmus of the pharynx, proximal gonad sheath cells, spermatheca and uterine sheath cells. In males, expressed in the valve cell, the vas deferens and retractor and ventral protactor muscles.

The enzyme catalyses a 1,2-diacyl-sn-glycero-3-phospho-(1D-myo-inositol-4,5-bisphosphate) + H2O = 1D-myo-inositol 1,4,5-trisphosphate + a 1,2-diacyl-sn-glycerol + H(+). Functionally, mediates the production of the second messenger molecules diacylglycerol (DAG) and inositol 1,4,5-trisphosphate (IP3) which plays an important role in the regulation of intracellular signaling cascades. Regulates basal and ovulatory sheath cell contractions by controlling Ca(2+) oscillations via IP3-mediated activation of IP3 receptor itr-1. In intestinal epithelial cells, regulates Ca(2+) oscillations which control posterior body wall muscle contractions required for defecation by IP3-mediated activation of itr-1 and probably by activating TRPM channels gon-2 and gtl-1 by reducing PIP2 levels. By activating tpa-1 via DAG production, required for the expression of antimicrobial peptide nlp-29 in the epidermis in response to fungal infection or physical injury. By triggering Ca(2+) transient via IP3-mediated activation of IPR3 receptor itr-1 in ASH sensory neurons, involved in avoidance behavior in response to nose touch. Probably by regulating neuronal transmission in ALA neurons, mediates the decrease in pharyngeal pumping and locomotion during the quiescent state that precedes each larval molt, downstream of lin-3 and receptor let-23 and upstream of tpa-1 but not itr-1. During embryogenesis, may play an role in epidermal morphogenesis together with plc-1. Probably downstream of receptor daf-2, regulates male-sex muscle excitability in the absence of food. The chain is 1-phosphatidylinositol 4,5-bisphosphate phosphodiesterase gamma plc-3 from Caenorhabditis elegans.